A 165-amino-acid chain; its full sequence is 6,7-dimethyl-8-ribityllumazine synthase (165 aa).

5-amino-6-(D-ribitylamino)uracil contacts are provided by residues Phe-24, 62–64 (AFE), and 86–88 (AVI). 91 to 92 (DT) is a binding site for (2S)-2-hydroxy-3-oxobutyl phosphate. The active-site Proton donor is His-94. Phe-119 serves as a coordination point for 5-amino-6-(D-ribitylamino)uracil. A (2S)-2-hydroxy-3-oxobutyl phosphate-binding site is contributed by Arg-133.

This sequence belongs to the DMRL synthase family.

The enzyme catalyses (2S)-2-hydroxy-3-oxobutyl phosphate + 5-amino-6-(D-ribitylamino)uracil = 6,7-dimethyl-8-(1-D-ribityl)lumazine + phosphate + 2 H2O + H(+). The protein operates within cofactor biosynthesis; riboflavin biosynthesis; riboflavin from 2-hydroxy-3-oxobutyl phosphate and 5-amino-6-(D-ribitylamino)uracil: step 1/2. In terms of biological role, catalyzes the formation of 6,7-dimethyl-8-ribityllumazine by condensation of 5-amino-6-(D-ribitylamino)uracil with 3,4-dihydroxy-2-butanone 4-phosphate. This is the penultimate step in the biosynthesis of riboflavin. In Prochlorococcus marinus (strain MIT 9303), this protein is 6,7-dimethyl-8-ribityllumazine synthase.